The chain runs to 202 residues: MTQLDSRTEATTTRAFDQPRAEAAVRELLLAIGEDPDRGGLRDTPARVARAYREIFAGLYTDPDAVLNTMFDEDHDELVLIKEIPLYSTCEHHLVSFHGVAHVGYIPGRDGRVTGLSKIARLVDLYAKRPQVQERLTSQIADALVKRLGPRGVIVVVEAEHLCMAMRGVRKPGAVTTTSAVRGQFKTDAASRAEALDLILRK.

Cys-90, His-93, and Cys-163 together coordinate Zn(2+).

It belongs to the GTP cyclohydrolase I family. As to quaternary structure, homomer.

It carries out the reaction GTP + H2O = 7,8-dihydroneopterin 3'-triphosphate + formate + H(+). It functions in the pathway cofactor biosynthesis; 7,8-dihydroneopterin triphosphate biosynthesis; 7,8-dihydroneopterin triphosphate from GTP: step 1/1. The protein is GTP cyclohydrolase 1 of Mycobacterium marinum (strain ATCC BAA-535 / M).